The primary structure comprises 285 residues: MEDYILKVEELNYNYSDGTHALKGINMNIKRGEVTAILGGNGVGKSTLFQNFNGILKPSSGRILFDNKPIDYSRKGIMKLRESIGIVFQDPDNQLFSASVYQDVSFGAVNMKLPEDEIRKRVDNALKRTGIEHLKNKPTHCLSFGQKKRVAIAGVLVMEPKVLILDEPTAGLDPMGVSEIMKLLVEMQKELGITIIIATHDIDIVPLYCDNVFVMKEGRVILQGNPKEVFAEKEVIRKVNLRLPRIGHLMEILKEKDGFVFDELDLTIGQARKTINSWKNKIFND.

Residues 6 to 242 (LKVEELNYNY…KEVIRKVNLR (237 aa)) enclose the ABC transporter domain. 39 to 46 (GGNGVGKS) provides a ligand contact to ATP.

It belongs to the ABC transporter superfamily. Energy-coupling factor EcfA family. As to quaternary structure, forms a stable energy-coupling factor (ECF) transporter complex composed of 2 membrane-embedded substrate-binding proteins (S component), 2 ATP-binding proteins (A component) and 2 transmembrane proteins (T component).

It is found in the cell membrane. Its function is as follows. ATP-binding (A) component of a common energy-coupling factor (ECF) ABC-transporter complex. Unlike classic ABC transporters this ECF transporter provides the energy necessary to transport a number of different substrates. This Clostridium perfringens (strain SM101 / Type A) protein is Energy-coupling factor transporter ATP-binding protein EcfA2.